Here is a 203-residue protein sequence, read N- to C-terminus: Urease accessory protein UreG (203 aa).

14-21 (GPVGSGKT) provides a ligand contact to GTP.

Belongs to the SIMIBI class G3E GTPase family. UreG subfamily. In terms of assembly, homodimer. UreD, UreF and UreG form a complex that acts as a GTP-hydrolysis-dependent molecular chaperone, activating the urease apoprotein by helping to assemble the nickel containing metallocenter of UreC. The UreE protein probably delivers the nickel.

The protein resides in the cytoplasm. Functionally, facilitates the functional incorporation of the urease nickel metallocenter. This process requires GTP hydrolysis, probably effectuated by UreG. In Rhizobium meliloti (strain 1021) (Ensifer meliloti), this protein is Urease accessory protein UreG.